The chain runs to 1129 residues: Protein DWARF 53-LIKE (1129 aa).

The Clp R domain maps to 8–180 (ARQCLSPAAV…KLAILRPAPP (173 aa)). 2 repeat regions span residues 12–85 (LSPA…LDRL) and 102–180 (VSNS…PAPP). Residues 519-573 (RYIGVPADKERSANPSKGSESIGVQKDVIKPCAVSAVHSSSTARPISSPSVTNKR) form a disordered region. The span at 557-568 (SSSTARPISSPS) shows a compositional bias: low complexity. The short motif at 577–581 (LVLNL) is the EAR 1 element. The segment at 587–654 (KSDENLQERG…KRVEDSERSV (68 aa)) is disordered. Positions 596–608 (GMQSQHGTLSNAD) are enriched in polar residues. Basic and acidic residues predominate over residues 645–654 (KRVEDSERSV). 2 short sequence motifs (EAR) span residues 798-802 (LDLNL) and 975-980 (FDLNLP). The tract at residues 975–1001 (FDLNLPVDEDEPFDADDDSSSHENSYG) is disordered. Over residues 981 to 992 (VDEDEPFDADDD) the composition is skewed to acidic residues.

This sequence belongs to the ClpA/ClpB family. In terms of processing, polyubiquitinated. Strigolactone, but not karrikin, triggers rapid SCF(D3)-dependent degradation via the proteasome.

Functionally, repressor of strigolactones (SL) signaling. Subjected to a negative feedback control of SL signaling. The chain is Protein DWARF 53-LIKE from Oryza sativa subsp. japonica (Rice).